Reading from the N-terminus, the 144-residue chain is Acidic phospholipase A2 S15-109 (144 aa).

The N-terminal stretch at 1-19 (MYPAHLLVLLAVCVSLLGA) is a signal peptide. The propeptide occupies 20-27 (SDIPPQPL). 7 disulfide bridges follow: C38/C98, C54/C143, C56/C72, C71/C126, C78/C119, C87/C112, and C105/C117. Positions 55, 57, and 59 each coordinate Ca(2+). Residue H75 is part of the active site. D76 contacts Ca(2+). D120 is a catalytic residue.

The protein belongs to the phospholipase A2 family. Group I subfamily. D49 sub-subfamily. The cofactor is Ca(2+). In terms of tissue distribution, expressed by the venom gland.

The protein resides in the secreted. The enzyme catalyses a 1,2-diacyl-sn-glycero-3-phosphocholine + H2O = a 1-acyl-sn-glycero-3-phosphocholine + a fatty acid + H(+). Snake venom phospholipase A2 (PLA2) that inhibits collagen-induced platelet aggregation. PLA2 catalyzes the calcium-dependent hydrolysis of the 2-acyl groups in 3-sn-phosphoglycerides. This Austrelaps superbus (Lowland copperhead snake) protein is Acidic phospholipase A2 S15-109.